We begin with the raw amino-acid sequence, 138 residues long: Small ribosomal subunit protein uS12 (138 aa).

Residues 1 to 22 (MPTINQLVRQGRKSISTKSDSP) show a composition bias toward polar residues. Residues 1-45 (MPTINQLVRQGRKSISTKSDSPALNFGYNSKKKSLTNNPAPQKRG) are disordered. Asp-102 carries the post-translational modification 3-methylthioaspartic acid.

The protein belongs to the universal ribosomal protein uS12 family. Part of the 30S ribosomal subunit. Contacts proteins S8 and S17. May interact with IF1 in the 30S initiation complex.

Its function is as follows. With S4 and S5 plays an important role in translational accuracy. Functionally, interacts with and stabilizes bases of the 16S rRNA that are involved in tRNA selection in the A site and with the mRNA backbone. Located at the interface of the 30S and 50S subunits, it traverses the body of the 30S subunit contacting proteins on the other side and probably holding the rRNA structure together. The combined cluster of proteins S8, S12 and S17 appears to hold together the shoulder and platform of the 30S subunit. The chain is Small ribosomal subunit protein uS12 from Lacticaseibacillus paracasei (strain ATCC 334 / BCRC 17002 / CCUG 31169 / CIP 107868 / KCTC 3260 / NRRL B-441) (Lactobacillus paracasei).